The sequence spans 274 residues: Dermonecrotic toxin SdSicTox-betaIIB1bx (274 aa).

H5 is a catalytic residue. Positions 25 and 27 each coordinate Mg(2+). H41 functions as the Nucleophile in the catalytic mechanism. 2 disulfides stabilise this stretch: C45–C51 and C47–C190. D85 is a binding site for Mg(2+).

The protein belongs to the arthropod phospholipase D family. Class II subfamily. The cofactor is Mg(2+). In terms of tissue distribution, expressed by the venom gland.

The protein localises to the secreted. The catalysed reaction is an N-(acyl)-sphingosylphosphocholine = an N-(acyl)-sphingosyl-1,3-cyclic phosphate + choline. It carries out the reaction an N-(acyl)-sphingosylphosphoethanolamine = an N-(acyl)-sphingosyl-1,3-cyclic phosphate + ethanolamine. The enzyme catalyses a 1-acyl-sn-glycero-3-phosphocholine = a 1-acyl-sn-glycero-2,3-cyclic phosphate + choline. It catalyses the reaction a 1-acyl-sn-glycero-3-phosphoethanolamine = a 1-acyl-sn-glycero-2,3-cyclic phosphate + ethanolamine. Functionally, dermonecrotic toxins cleave the phosphodiester linkage between the phosphate and headgroup of certain phospholipids (sphingolipid and lysolipid substrates), forming an alcohol (often choline) and a cyclic phosphate. This toxin acts on sphingomyelin (SM). It may also act on ceramide phosphoethanolamine (CPE), lysophosphatidylcholine (LPC) and lysophosphatidylethanolamine (LPE), but not on lysophosphatidylserine (LPS), and lysophosphatidylglycerol (LPG). It acts by transphosphatidylation, releasing exclusively cyclic phosphate products as second products. Induces dermonecrosis, hemolysis, increased vascular permeability, edema, inflammatory response, and platelet aggregation. The sequence is that of Dermonecrotic toxin SdSicTox-betaIIB1bx from Sicarius cf. damarensis (strain GJB-2008) (Six-eyed sand spider).